Reading from the N-terminus, the 115-residue chain is Gonadotropin subunit beta-2 (115 aa).

Disulfide bonds link cysteine 6-cysteine 54, cysteine 20-cysteine 69, cysteine 23-cysteine 107, cysteine 31-cysteine 85, cysteine 35-cysteine 87, and cysteine 90-cysteine 97. Asparagine 10 is a glycosylation site (N-linked (GlcNAc...) asparagine).

It belongs to the glycoprotein hormones subunit beta family. As to quaternary structure, heterodimer of an alpha and a beta chain.

The protein localises to the secreted. Its function is as follows. Involved in gametogenesis and steroidogenesis. The sequence is that of Gonadotropin subunit beta-2 (cgbb) from Thunnus obesus (Bigeye tuna).